The sequence spans 426 residues: Glucose-6-phosphate isomerase (426 aa).

Glu282 (proton donor) is an active-site residue. Catalysis depends on residues His303 and Lys417.

It belongs to the GPI family.

It is found in the cytoplasm. The catalysed reaction is alpha-D-glucose 6-phosphate = beta-D-fructose 6-phosphate. The protein operates within carbohydrate biosynthesis; gluconeogenesis. It functions in the pathway carbohydrate degradation; glycolysis; D-glyceraldehyde 3-phosphate and glycerone phosphate from D-glucose: step 2/4. Its function is as follows. Catalyzes the reversible isomerization of glucose-6-phosphate to fructose-6-phosphate. The sequence is that of Glucose-6-phosphate isomerase from Onion yellows phytoplasma (strain OY-M).